A 376-amino-acid chain; its full sequence is MSNKVARRLGKCLFVSGRRFESRQSILQLRTETLTDTPLSATLDQSQFSMFKAAEIVNAAAACAEAECIEQLKKTDVVPLLMNYLLGEEQILVADPTAVAAKLRKMVVGGAGKTVVISDFDYTLSRFANEQGERLSTTHGVFDDNVMRLKPELGQKFVDLKNKYYPIEFSPNLTMEEKIPHMEKWWGTSHSLIVNEKFSKNTIEDFVRQSRIVFKDGAEDFIEALDAHNIPLVIFSAGIGNIIEYFLQQKLGAIPRNTHFISNMILFDEDDNACAFSEPLIHTFCKNSSVIQKETSFFHDIAGRVNVILLGDSMGDIHMDVGVERDGPTLKVGYYNGSLDDTAALQHYEEVYDIVLIHDPTLNVAQKIVDIINSSH.

Catalysis depends on Asp119, which acts as the Nucleophile. 2 residues coordinate Mg(2+): Asp119 and Asp121. Asp121 (proton donor) is an active-site residue. Residues Glu168, Ser189, 236–237 (SA), and Lys286 each bind substrate. Asp312 contributes to the Mg(2+) binding site.

The protein belongs to the pyrimidine 5'-nucleotidase family.

It is found in the cytoplasm. It carries out the reaction a ribonucleoside 5'-phosphate + H2O = a ribonucleoside + phosphate. In Caenorhabditis elegans, this protein is Putative cytosolic 5'-nucleotidase 3.